A 126-amino-acid chain; its full sequence is Glycine cleavage system H protein (126 aa).

In terms of domain architecture, Lipoyl-binding spans 24–105 (TLTVGITDHA…AYGVWLFKIK (82 aa)). N6-lipoyllysine is present on K65.

This sequence belongs to the GcvH family. The glycine cleavage system is composed of four proteins: P, T, L and H. (R)-lipoate serves as cofactor.

In terms of biological role, the glycine cleavage system catalyzes the degradation of glycine. The H protein shuttles the methylamine group of glycine from the P protein to the T protein. The sequence is that of Glycine cleavage system H protein from Burkholderia cenocepacia (strain HI2424).